The sequence spans 515 residues: Probable multifunctional siroheme biosynthesis protein HemA (515 aa).

Residues 26 to 27 (SL) and 47 to 48 (IR) each bind NAD(+). The segment at 26–174 (SLDYKSAAID…TAAKKAKTEI (149 aa)) is glutamyl-tRNA reductase. Residues 68–71 (TCNR), S127, E132, and Q138 contribute to the L-glutamyl-tRNA(Glu) site. C69 functions as the Nucleophile in the catalytic mechanism. 206 to 211 (GNGEIG) contributes to the NADP(+) binding site. The tract at residues 367-507 (FPLFIDLSGK…SLVKSVAEQI (141 aa)) is precorrin-2 dehydrogenase /sirohydrochlorin ferrochelatase.

It in the N-terminal section; belongs to the glutamyl-tRNA reductase family. In the C-terminal section; belongs to the precorrin-2 dehydrogenase / sirohydrochlorin ferrochelatase family. In terms of assembly, homodimer.

The enzyme catalyses (S)-4-amino-5-oxopentanoate + tRNA(Glu) + NADP(+) = L-glutamyl-tRNA(Glu) + NADPH + H(+). It catalyses the reaction precorrin-2 + NAD(+) = sirohydrochlorin + NADH + 2 H(+). It carries out the reaction siroheme + 2 H(+) = sirohydrochlorin + Fe(2+). Its pathway is cofactor biosynthesis; adenosylcobalamin biosynthesis; sirohydrochlorin from precorrin-2: step 1/1. It participates in porphyrin-containing compound metabolism; siroheme biosynthesis; siroheme from sirohydrochlorin: step 1/1. The protein operates within porphyrin-containing compound metabolism; siroheme biosynthesis; sirohydrochlorin from precorrin-2: step 1/1. It functions in the pathway porphyrin-containing compound metabolism; protoporphyrin-IX biosynthesis; 5-aminolevulinate from L-glutamyl-tRNA(Glu): step 1/2. Functionally, multifunctional enzyme that catalyzes the NADPH-dependent reduction of glutamyl-tRNA(Glu) to glutamate 1-semialdehyde (GSA), the NAD-dependent ring dehydrogenation of precorrin-2 to sirohydrochlorin and finally, the ferrochelation of sirohydrochlorin to yield siroheme. This chain is Probable multifunctional siroheme biosynthesis protein HemA, found in Ruminiclostridium josui (Clostridium josui).